The sequence spans 655 residues: Tetratricopeptide repeat protein 30 homolog (655 aa).

TPR repeat units follow at residues 10 to 43 (EGHV…ANTR), 44 to 76 (AGLS…APKE), 143 to 176 (ADTL…GGFN), 178 to 210 (LVAY…GMRN), 385 to 418 (LAAK…YLPV), 450 to 484 (SIWR…HSDD), and 534 to 567 (CIVN…GSGN).

Belongs to the TTC30/dfy-1/fleer family.

It localises to the cell projection. Its subcellular location is the cilium. Required for polyglutamylation of axonemal tubulin in sensory cilia. Plays a role in anterograde intraflagellar transport (IFT), the process by which cilia precursors are transported from the base of the cilium to the site of their incorporation at the tip. The polypeptide is Tetratricopeptide repeat protein 30 homolog (Drosophila melanogaster (Fruit fly)).